The following is a 227-amino-acid chain: Protein FAM3C (227 aa).

A signal peptide spans 1–24; that stretch reads MRVAGAAKLVVAVAVFLLTFYVIS. Cystine bridges form between Cys58/Cys86 and Cys64/Cys221. Residues 67-225 form the GG-type lectin domain; that stretch reads KHFAFKMASG…VEMEGCIPQK (159 aa).

It belongs to the FAM3 family.

It is found in the secreted. The protein localises to the cytoplasmic vesicle. Functionally, may be involved in retinal laminar formation. Promotes epithelial to mesenchymal transition. This is Protein FAM3C (Fam3c) from Rattus norvegicus (Rat).